Here is a 545-residue protein sequence, read N- to C-terminus: CTP synthase (545 aa).

The amidoligase domain stretch occupies residues 1–266 (MTTNYIFVTG…DDYICKRFSL (266 aa)). CTP is bound at residue Ser14. Ser14 serves as a coordination point for UTP. Residues 15–20 (SLGKGI) and Asp72 contribute to the ATP site. Asp72 and Glu140 together coordinate Mg(2+). Residues 147-149 (DIE), 187-192 (KTKPTQ), and Lys223 each bind CTP. UTP is bound by residues 187 to 192 (KTKPTQ) and Lys223. An ATP-binding site is contributed by 239 to 241 (KDV). Residues 291 to 542 (TIGMIGKYVE…VKAAGDYQKR (252 aa)) enclose the Glutamine amidotransferase type-1 domain. An L-glutamine-binding site is contributed by Gly352. Catalysis depends on Cys379, which acts as the Nucleophile; for glutamine hydrolysis. L-glutamine-binding positions include 380–383 (LGMQ), Glu403, and Arg470. Active-site residues include His515 and Glu517.

Belongs to the CTP synthase family. As to quaternary structure, homotetramer.

It carries out the reaction UTP + L-glutamine + ATP + H2O = CTP + L-glutamate + ADP + phosphate + 2 H(+). The catalysed reaction is L-glutamine + H2O = L-glutamate + NH4(+). It catalyses the reaction UTP + NH4(+) + ATP = CTP + ADP + phosphate + 2 H(+). It functions in the pathway pyrimidine metabolism; CTP biosynthesis via de novo pathway; CTP from UDP: step 2/2. Allosterically activated by GTP, when glutamine is the substrate; GTP has no effect on the reaction when ammonia is the substrate. The allosteric effector GTP functions by stabilizing the protein conformation that binds the tetrahedral intermediate(s) formed during glutamine hydrolysis. Inhibited by the product CTP, via allosteric rather than competitive inhibition. In terms of biological role, catalyzes the ATP-dependent amination of UTP to CTP with either L-glutamine or ammonia as the source of nitrogen. Regulates intracellular CTP levels through interactions with the four ribonucleotide triphosphates. The protein is CTP synthase of Yersinia pseudotuberculosis serotype O:1b (strain IP 31758).